The chain runs to 207 residues: Ras-related protein Rab-8B (207 aa).

GTP-binding residues include Ser-17, Gly-18, Val-19, Gly-20, Lys-21, Thr-22, Cys-23, Thr-35, Ser-39, and Thr-40. Thr-22 is a binding site for Mg(2+). 2 short sequence motifs (switch) span residues 31-45 (DAFN…GIDF) and 63-80 (DTAG…YYRG). Mg(2+) is bound by residues Thr-40 and Asp-63. Gly-66 contacts GTP. The residue at position 72 (Thr-72) is a Phosphothreonine; by LRRK2. GTP is bound by residues Asn-121, Lys-122, Asp-124, Ala-152, and Lys-153. Ser-180 bears the Phosphoserine mark. Cys-204 carries the cysteine methyl ester modification. Cys-204 carries the S-geranylgeranyl cysteine lipid modification. A propeptide spans 205–207 (SLL) (removed in mature form).

It belongs to the small GTPase superfamily. Rab family. In terms of assembly, associated with actin, delta-catenin and alpha and beta tubulins. Interacts with OTOF. Interacts with PEX5R. Interacts with RAB3IP. Interacts with VIM. Interacts with CDH1. Interacts with MICALL2. Interacts with GDI1, GDI2, CHML and CHM; phosphorylation at Thr-72 disrupts these interactions. Interacts with MICAL1. Mg(2+) is required as a cofactor. In terms of processing, phosphorylation of Thr-72 in the switch II region by LRRK2 prevents the association of RAB regulatory proteins, including CHM, CHML and RAB GDP dissociation inhibitors GDI1 and GDI2.

The protein resides in the cell membrane. The protein localises to the cytoplasmic vesicle. It localises to the phagosome. It is found in the phagosome membrane. Its subcellular location is the endosome membrane. It catalyses the reaction GTP + H2O = GDP + phosphate + H(+). Regulated by guanine nucleotide exchange factors (GEFs) including RAB3IP/RABIN8 which promotes the exchange of bound GDP for free GTP. Regulated by GTPase activating proteins (GAPs) which increase the GTP hydrolysis activity. Inhibited by GDP dissociation inhibitors (GDIs). The small GTPases Rab are key regulators of intracellular membrane trafficking, from the formation of transport vesicles to their fusion with membranes. Rabs cycle between an inactive GDP-bound form and an active GTP-bound form that is able to recruit to membranes different sets of downstream effectors directly responsible for vesicle formation, movement, tethering and fusion. RAB8B may be involved in polarized vesicular trafficking and neurotransmitter release. May participate in cell junction dynamics in Sertoli cells. May also participate in the export of a subset of neosynthesized proteins through a Rab8-Rab10-Rab11-dependent endososomal export route. The protein is Ras-related protein Rab-8B of Homo sapiens (Human).